A 354-amino-acid polypeptide reads, in one-letter code: MTTLKNDRYLKALLREPVDMTPVWMMRQAGRYLPEYKATRAEAGDFMSLCRNADLACEVTLQPLRRYELDAAILFSDILTIPDAMGLGLTFGAGEGPKFDRPIETKSAVENLPIPDPEQELQYVMNAVRTIRRELNGEVPLIGFSGSPWTLATYMVEGGSTKAFTKIKKMMYAEPKLLHKLLDKVADSVVLYLNAQIKAGAQAVMIFDTWGGVLGHREYLDFSLQYMHKIVNGLIRENDGRKVPVTLFTKGGGLWLDAIADTGCDAIGLDWTVNLAQAKAQVGHKVALQGNMDPSVLYAAPERIEQEVRSILADFGEGSGHVFNLGHGIHQDVPVESPKVFVDAIHQYSKPYHK.

Residues 27–31 (RQAGR), Asp-77, Tyr-154, Thr-209, and His-327 contribute to the substrate site.

The protein belongs to the uroporphyrinogen decarboxylase family. As to quaternary structure, homodimer.

The protein resides in the cytoplasm. It carries out the reaction uroporphyrinogen III + 4 H(+) = coproporphyrinogen III + 4 CO2. It functions in the pathway porphyrin-containing compound metabolism; protoporphyrin-IX biosynthesis; coproporphyrinogen-III from 5-aminolevulinate: step 4/4. In terms of biological role, catalyzes the decarboxylation of four acetate groups of uroporphyrinogen-III to yield coproporphyrinogen-III. This Mannheimia succiniciproducens (strain KCTC 0769BP / MBEL55E) protein is Uroporphyrinogen decarboxylase.